The chain runs to 526 residues: NAD(P)H-quinone oxidoreductase chain 4 1 (526 aa).

14 helical membrane-spanning segments follow: residues 7–27 (FPWLSALVLLPLLAAFGIPLL), 35–55 (WYALAVGALDLGLMAYIFGWH), 86–106 (LSFPLVLLSGLITTLAIVAAW), 114–134 (LFFFLLLLMYGAQVGVFLAQD), 135–155 (LLLFFLMWEIELVPVYLLIAI), 168–188 (FILYTAAASIFILVGSLAMAF), 208–228 (ALQILAYAAFLIAFGVKLPVF), 242–262 (SAPISMILAGVLLKMGGYGLI), 276–296 (FAPVLAVLGAVNIVYGALAAL), 310–330 (IAHMGFVLIGIAAFTELGLNG), 331–351 (ALLQMISHGLIAAVLFFLTGI), 374–396 (AFALFTAGSLASLALPGMSGFVG), 417–437 (GIALLAAVGIILTPIYLLSML), and 463–483 (MAVALCLLLPILGIGLYPRLA).

It belongs to the complex I subunit 4 family.

It is found in the cellular thylakoid membrane. It carries out the reaction a plastoquinone + NADH + (n+1) H(+)(in) = a plastoquinol + NAD(+) + n H(+)(out). The catalysed reaction is a plastoquinone + NADPH + (n+1) H(+)(in) = a plastoquinol + NADP(+) + n H(+)(out). NDH-1 shuttles electrons from NAD(P)H, via FMN and iron-sulfur (Fe-S) centers, to quinones in the respiratory chain. The immediate electron acceptor for the enzyme in this species is believed to be plastoquinone. Couples the redox reaction to proton translocation (for every two electrons transferred, four hydrogen ions are translocated across the cytoplasmic membrane), and thus conserves the redox energy in a proton gradient. The sequence is that of NAD(P)H-quinone oxidoreductase chain 4 1 from Synechococcus sp. (strain JA-3-3Ab) (Cyanobacteria bacterium Yellowstone A-Prime).